Consider the following 890-residue polypeptide: V-type proton ATPase subunit a, Golgi isoform (890 aa).

At methionine 1 the chain carries N-acetylmethionine. Residues 1 to 450 (MNQEEAIFRS…DAYGIATYKE (450 aa)) lie on the Cytoplasmic side of the membrane. Positions 113–154 (LENVNDMVKEITDCESRARQLDESLDSLRSKLNDLLEQRQVI) form a coiled coil. Serine 223 and serine 228 each carry phosphoserine. Positions 297–347 (LKKVKRVIDSLNGKIVSLNTRSSELVDTLNRQIDDLQRILDTTEQTLHTEL) form a coiled coil. The helical transmembrane segment at 451–469 (INAGLATVVTFPFMFAIMF) threads the bilayer. The Vacuolar segment spans residues 470–471 (GD). Residues 472 to 488 (MGHGFILFLMALFLVLN) traverse the membrane as a helical segment. The Cytoplasmic segment spans residues 489 to 502 (ERKFGAMHRDEIFD). The helical transmembrane segment at 503–532 (MAFTGRYVLLLMGAFSVYTGLLYNDIFSKS) threads the bilayer. Over 533-580 (MTIFKSGWQWPSTFRKGESIEAKKTGVYPFGLDFAWHGTDNGLLFSNS) the chain is Vacuolar. A helical membrane pass occupies residues 581–600 (YKMKLSILMGYAHMTYSFMF). The Cytoplasmic portion of the chain corresponds to 601 to 618 (SYINYRAKNSKVDIIGNF). The helical transmembrane segment at 619–639 (IPGLVFMQSIFGYLSWAIVYK) threads the bilayer. Over 640-682 (WSKDWIKDDKPAPGLLNMLINMFLAPGTIDDQLYSGQAKLQVV) the chain is Vacuolar. Residues 683-702 (LLLAALVCVPWLLLYKPLTL) traverse the membrane as a helical segment. Topologically, residues 703-779 (RRLNKNGGGG…DVMIHQVIHT (77 aa)) are cytoplasmic. A helical transmembrane segment spans residues 780-804 (IEFCLNCISHTASYLRLWALSLAHA). The Vacuolar portion of the chain corresponds to 805–828 (QLSSVLWDMTISNAFSSKNSGSPL). A helical membrane pass occupies residues 829–867 (AVMKVVFLFAMWFVLTVCILVFMEGTSAMLHALRLHWVE). Residues 868-890 (AMSKFFEGEGYAYEPFSFRAIIE) lie on the Cytoplasmic side of the membrane.

Belongs to the V-ATPase 116 kDa subunit family. V-ATPase is a heteromultimeric enzyme composed of a peripheral catalytic V1 complex (components A to H) attached to an integral membrane V0 proton pore complex (components: a, c, c', c'', d, e, f and VOA1). Glycosylated.

The protein resides in the endosome membrane. It is found in the golgi apparatus membrane. Subunit of the V0 complex of vacuolar(H+)-ATPase (V-ATPase), a multisubunit enzyme composed of a peripheral complex (V1) that hydrolyzes ATP and a membrane integral complex (V0) that translocates protons. V-ATPase is responsible for acidifying and maintaining the pH of intracellular compartments. Is present only in Golgi- and endosome-residing V-ATPase complexes; enzymes containing this subunit have a 4-fold lower ratio of proton transport to ATP hydrolysis than complexes containing the vacuolar isoform and do not dissociate V1 and V0 in response to glucose depletion. The sequence is that of V-type proton ATPase subunit a, Golgi isoform (STV1) from Saccharomyces cerevisiae (strain ATCC 204508 / S288c) (Baker's yeast).